A 346-amino-acid polypeptide reads, in one-letter code: D-erythrose-4-phosphate dehydrogenase (346 aa).

11–12 (RI) contacts NAD(+). Substrate is bound by residues 163-165 (SCT), Arg209, 222-223 (TK), and Arg245. Residue Cys164 is the Nucleophile of the active site. Asn327 provides a ligand contact to NAD(+).

Belongs to the glyceraldehyde-3-phosphate dehydrogenase family. Epd subfamily. As to quaternary structure, homotetramer.

Its subcellular location is the cytoplasm. It catalyses the reaction D-erythrose 4-phosphate + NAD(+) + H2O = 4-phospho-D-erythronate + NADH + 2 H(+). The protein operates within cofactor biosynthesis; pyridoxine 5'-phosphate biosynthesis; pyridoxine 5'-phosphate from D-erythrose 4-phosphate: step 1/5. Its function is as follows. Catalyzes the NAD-dependent conversion of D-erythrose 4-phosphate to 4-phosphoerythronate. This chain is D-erythrose-4-phosphate dehydrogenase, found in Vibrio vulnificus (strain YJ016).